The primary structure comprises 379 residues: MEQRDYYELLEVSRNASDAEIKKAYRRLAMKYHPDRNPGDTSAEEKFKEIQKAYNILSDKQKRAAYDQFGHAGVDPSMGGGPGGFGGFGGFGDVFEDIFENIFSGGRGHGRQSRGQRGADLQFNVQLTLEEAAIGKEVEITVPRHGTCTVCEGSGAKKGTSPKTCETCQGMGQVRIQQGFFSIQQTCPTCHGEGKIISDPCASCHGQGRVRESKKINVKIPAGVDNGDRVRLSGEGEAGVHGGGSGDLYVQISLKKHAIFERHENDLHCEVPISFATAALGGSIEVPTLEGRVTLKIPAETQTGKVFRLRSKGMKSVRGYGQGDLLCKVVVETPVNLSREQKELLNKLQDSLENAKGTHSPKTSSWFAGVKKFFEDMKF.

Residues 5–70 form the J domain; that stretch reads DYYELLEVSR…QKRAAYDQFG (66 aa). The CR-type zinc-finger motif lies at 135-213; the sequence is GKEVEITVPR…CHGQGRVRES (79 aa). Zn(2+) contacts are provided by C148, C151, C165, C168, C187, C190, C201, and C204. CXXCXGXG motif repeat units lie at residues 148–155, 165–172, 187–194, and 201–208; these read CTVCEGSG, CETCQGMG, CPTCHGEG, and CASCHGQG.

Belongs to the DnaJ family. Homodimer. It depends on Zn(2+) as a cofactor.

It is found in the cytoplasm. In terms of biological role, participates actively in the response to hyperosmotic and heat shock by preventing the aggregation of stress-denatured proteins and by disaggregating proteins, also in an autonomous, DnaK-independent fashion. Unfolded proteins bind initially to DnaJ; upon interaction with the DnaJ-bound protein, DnaK hydrolyzes its bound ATP, resulting in the formation of a stable complex. GrpE releases ADP from DnaK; ATP binding to DnaK triggers the release of the substrate protein, thus completing the reaction cycle. Several rounds of ATP-dependent interactions between DnaJ, DnaK and GrpE are required for fully efficient folding. Also involved, together with DnaK and GrpE, in the DNA replication of plasmids through activation of initiation proteins. The chain is Chaperone protein DnaJ from Legionella pneumophila (strain Corby).